Reading from the N-terminus, the 310-residue chain is MSADFRHEPVLANEILELLRPRPGELFLDGTLGGGGHSGLLLEAGARVIALDKDPRALAAATARLARFGEAFRAVRSDFRDAKNVLEALGIAAVDGALVDLGVSSPQLDEAERGFSFSRPGPLDMRMGDTGETLEDLLRRIDERELARILREYGEEPFARPVARAVKAALETEAPLDTARLAEVVAGAIPRKAWPHRIHPATRTFQALRIAVNDELGALAAWLDGLPGVLAPGGRAAAISFHSLEDRMVKEKFRALTQACTCPPDLPVCACGAKASFAAITRKAVKASDEEIARNPRARSARLRAVEKLR.

Residues 35 to 37 (GGH), D52, F79, D100, and Q107 each bind S-adenosyl-L-methionine.

The protein belongs to the methyltransferase superfamily. RsmH family.

Its subcellular location is the cytoplasm. The enzyme catalyses cytidine(1402) in 16S rRNA + S-adenosyl-L-methionine = N(4)-methylcytidine(1402) in 16S rRNA + S-adenosyl-L-homocysteine + H(+). Specifically methylates the N4 position of cytidine in position 1402 (C1402) of 16S rRNA. The polypeptide is Ribosomal RNA small subunit methyltransferase H (Anaeromyxobacter dehalogenans (strain 2CP-1 / ATCC BAA-258)).